The primary structure comprises 336 residues: MIVLGLETSCDETGLALYDSELGLRGQVLYSQIKLHAEYGGVVPELASRDHVRKLIPLMNQLLEQSGVKKQEIDAVAYTRGPGLMGALMTGALFGRTLAFSLNKPAIGVHHMEGHMLAPLLSSQPPEFPFVALLVSGGHTQLMVVHGIGQYELLGESIDDAAGEAFDKVAKMMNLPYPGGPNIAKLALSGDPLAFEFPRPMLHQGLDFSFSGLKTAVSVQLKKLNGENRDADIAASFQEAIVDTLVKKSVKALKQTGLKRLVIAGGVSANLRLREQLETSLARIKAQVYYAEPALCTDNGAMIAFAGYQRLKAGQHDGLAVTTTPRWPMTELTIPE.

Fe cation is bound by residues His-111 and His-115. Substrate is bound by residues 134–138 (LVSGG), Asp-167, Gly-180, and Asn-270. Asp-298 provides a ligand contact to Fe cation.

Belongs to the KAE1 / TsaD family. Fe(2+) serves as cofactor.

The protein localises to the cytoplasm. The enzyme catalyses L-threonylcarbamoyladenylate + adenosine(37) in tRNA = N(6)-L-threonylcarbamoyladenosine(37) in tRNA + AMP + H(+). Functionally, required for the formation of a threonylcarbamoyl group on adenosine at position 37 (t(6)A37) in tRNAs that read codons beginning with adenine. Is involved in the transfer of the threonylcarbamoyl moiety of threonylcarbamoyl-AMP (TC-AMP) to the N6 group of A37, together with TsaE and TsaB. TsaD likely plays a direct catalytic role in this reaction. The protein is tRNA N6-adenosine threonylcarbamoyltransferase of Acinetobacter baumannii (strain SDF).